Here is a 165-residue protein sequence, read N- to C-terminus: Nucleotide-binding protein A9601_05361 (165 aa).

It belongs to the YajQ family.

Functionally, nucleotide-binding protein. This chain is Nucleotide-binding protein A9601_05361, found in Prochlorococcus marinus (strain AS9601).